Here is a 411-residue protein sequence, read N- to C-terminus: Serine hydroxymethyltransferase (411 aa).

Residues Leu-119 and 123 to 125 (GHL) contribute to the (6S)-5,6,7,8-tetrahydrofolate site. Lys-228 bears the N6-(pyridoxal phosphate)lysine mark. 351–353 (SPF) lines the (6S)-5,6,7,8-tetrahydrofolate pocket.

It belongs to the SHMT family. As to quaternary structure, homodimer. The cofactor is pyridoxal 5'-phosphate.

The protein resides in the cytoplasm. The catalysed reaction is (6R)-5,10-methylene-5,6,7,8-tetrahydrofolate + glycine + H2O = (6S)-5,6,7,8-tetrahydrofolate + L-serine. It participates in one-carbon metabolism; tetrahydrofolate interconversion. It functions in the pathway amino-acid biosynthesis; glycine biosynthesis; glycine from L-serine: step 1/1. Its function is as follows. Catalyzes the reversible interconversion of serine and glycine with tetrahydrofolate (THF) serving as the one-carbon carrier. This reaction serves as the major source of one-carbon groups required for the biosynthesis of purines, thymidylate, methionine, and other important biomolecules. Also exhibits THF-independent aldolase activity toward beta-hydroxyamino acids, producing glycine and aldehydes, via a retro-aldol mechanism. In Clostridium botulinum (strain Eklund 17B / Type B), this protein is Serine hydroxymethyltransferase.